A 465-amino-acid chain; its full sequence is Serine carboxypeptidase-like 46 (465 aa).

The signal sequence occupies residues 1-25 (MPRLQCLTMATSLILLLQALSLVSS). Cystine bridges form between Cys-88–Cys-344, Cys-245–Cys-263, and Cys-288–Cys-313. N-linked (GlcNAc...) asparagine glycans are attached at residues Asn-137 and Asn-170. Ser-179 is a catalytic residue. An N-linked (GlcNAc...) asparagine glycan is attached at Asn-246. Active-site residues include Asp-381 and His-438.

Belongs to the peptidase S10 family. In terms of tissue distribution, ubiquitous.

It localises to the secreted. Its function is as follows. Probable carboxypeptidase. In Arabidopsis thaliana (Mouse-ear cress), this protein is Serine carboxypeptidase-like 46 (SCPL46).